The chain runs to 289 residues: MASLKEVKGRIASVNNTRKITSAMKMVASAKLHKAQAAIENMLPYERRLNHILTNFLSADSEVESPFIVKREVKRVAIVVFASNTSLCGGFNANIIRHLTVILDEYKSLGMENVLLYPVGRKVAEGVKKLGFKAEGDFQHMADKPSYQEAAALAEDLMRRFLHRDIDKVELLYNHFRSTAVQVLTRETYLPIDLTQEKKEEDKGRIPDYIVEPSVDVVMGELLPKVLRMKMFTVLLDSNASEHAARTMAMQIATDNANDLLQDLTVMYNKSRQQAITNELLDIVGGSMA.

It belongs to the ATPase gamma chain family. As to quaternary structure, F-type ATPases have 2 components, CF(1) - the catalytic core - and CF(0) - the membrane proton channel. CF(1) has five subunits: alpha(3), beta(3), gamma(1), delta(1), epsilon(1). CF(0) has three main subunits: a, b and c.

Its subcellular location is the cell inner membrane. Produces ATP from ADP in the presence of a proton gradient across the membrane. The gamma chain is believed to be important in regulating ATPase activity and the flow of protons through the CF(0) complex. In Phocaeicola vulgatus (strain ATCC 8482 / DSM 1447 / JCM 5826 / CCUG 4940 / NBRC 14291 / NCTC 11154) (Bacteroides vulgatus), this protein is ATP synthase gamma chain.